We begin with the raw amino-acid sequence, 68 residues long: Large ribosomal subunit protein bL33c (68 aa).

This sequence belongs to the bacterial ribosomal protein bL33 family.

It is found in the plastid. The sequence is that of Large ribosomal subunit protein bL33c from Cuscuta exaltata (Tall dodder).